The chain runs to 287 residues: Pantothenate synthetase (287 aa).

30-37 (MGYLHEGH) provides a ligand contact to ATP. Histidine 37 (proton donor) is an active-site residue. Glutamine 61 lines the (R)-pantoate pocket. Residue glutamine 61 participates in beta-alanine binding. Residue 150-153 (GMKD) participates in ATP binding. A (R)-pantoate-binding site is contributed by glutamine 156. ATP is bound by residues valine 179 and 187–190 (LSSR).

The protein belongs to the pantothenate synthetase family. As to quaternary structure, homodimer.

The protein localises to the cytoplasm. The catalysed reaction is (R)-pantoate + beta-alanine + ATP = (R)-pantothenate + AMP + diphosphate + H(+). Its pathway is cofactor biosynthesis; (R)-pantothenate biosynthesis; (R)-pantothenate from (R)-pantoate and beta-alanine: step 1/1. Its function is as follows. Catalyzes the condensation of pantoate with beta-alanine in an ATP-dependent reaction via a pantoyl-adenylate intermediate. This chain is Pantothenate synthetase, found in Coprothermobacter proteolyticus (strain ATCC 35245 / DSM 5265 / OCM 4 / BT).